The chain runs to 336 residues: Holliday junction branch migration complex subunit RuvB (336 aa).

Positions 4–184 (ADRLISATGV…FGIVQRLEFY (181 aa)) are large ATPase domain (RuvB-L). Residues Ile-23, Arg-24, Gly-65, Lys-68, Thr-69, Thr-70, 131-133 (EDY), Arg-174, Tyr-184, and Arg-221 contribute to the ATP site. Thr-69 provides a ligand contact to Mg(2+). The interval 185–255 (NVKDLTDIVS…IAARAMDMLD (71 aa)) is small ATPAse domain (RuvB-S). The tract at residues 258–336 (NEGFDFMDRK…HFGLQRPDER (79 aa)) is head domain (RuvB-H). Arg-313 and Arg-318 together coordinate DNA.

This sequence belongs to the RuvB family. In terms of assembly, homohexamer. Forms an RuvA(8)-RuvB(12)-Holliday junction (HJ) complex. HJ DNA is sandwiched between 2 RuvA tetramers; dsDNA enters through RuvA and exits via RuvB. An RuvB hexamer assembles on each DNA strand where it exits the tetramer. Each RuvB hexamer is contacted by two RuvA subunits (via domain III) on 2 adjacent RuvB subunits; this complex drives branch migration. In the full resolvosome a probable DNA-RuvA(4)-RuvB(12)-RuvC(2) complex forms which resolves the HJ.

It is found in the cytoplasm. The catalysed reaction is ATP + H2O = ADP + phosphate + H(+). In terms of biological role, the RuvA-RuvB-RuvC complex processes Holliday junction (HJ) DNA during genetic recombination and DNA repair, while the RuvA-RuvB complex plays an important role in the rescue of blocked DNA replication forks via replication fork reversal (RFR). RuvA specifically binds to HJ cruciform DNA, conferring on it an open structure. The RuvB hexamer acts as an ATP-dependent pump, pulling dsDNA into and through the RuvAB complex. RuvB forms 2 homohexamers on either side of HJ DNA bound by 1 or 2 RuvA tetramers; 4 subunits per hexamer contact DNA at a time. Coordinated motions by a converter formed by DNA-disengaged RuvB subunits stimulates ATP hydrolysis and nucleotide exchange. Immobilization of the converter enables RuvB to convert the ATP-contained energy into a lever motion, pulling 2 nucleotides of DNA out of the RuvA tetramer per ATP hydrolyzed, thus driving DNA branch migration. The RuvB motors rotate together with the DNA substrate, which together with the progressing nucleotide cycle form the mechanistic basis for DNA recombination by continuous HJ branch migration. Branch migration allows RuvC to scan DNA until it finds its consensus sequence, where it cleaves and resolves cruciform DNA. This chain is Holliday junction branch migration complex subunit RuvB, found in Aeromonas salmonicida (strain A449).